Here is a 69-residue protein sequence, read N- to C-terminus: Large ribosomal subunit protein bL32c (69 aa).

Belongs to the bacterial ribosomal protein bL32 family.

It is found in the plastid. The protein localises to the chloroplast. The sequence is that of Large ribosomal subunit protein bL32c (rpl32) from Marchantia polymorpha (Common liverwort).